Reading from the N-terminus, the 485-residue chain is MGNEVRVRYAPSPTGHLHIGNARTALFNYLFARSQGGKFIIRIEDTDRKRNIEGGEQSQLNYLKWLGIDWDESVDVGGEYGPYRQSERNDIYKTYYEELLEKGLAYKCYCTEEELEKEREEQAARGEMPRYSGKCRNLTKEEQEKLEAEGRQPSIRFKVPQGEVIRFDDIVKGEISFETDGIGDFVIVKKDGTPTYNFAVAVDDYLMKMTHVLRGEDHISNTPKQIMIYNALGWDIPAFGHMTLIVNESRKKLSKRDESIIQFIEQYEELGYLPEALFNFITLLGWSPVGEEELFTKEQFIEIFDVNRLSKSPAVFDTHKLKWVNNQYVKKLDLDQVIELTVPHLQKAGKVSEELSGSEQEWVRKLISLYQEQLSYGAEIVELTELFFKDDIQYNREARTVLEEEQVPEVLRVFAEKLEQLDSFTADEIKASIKAVQKETGHKGKKLFMPIRVATTGQTHGPELPQSIELLGKDTVLKRLHNIIQ.

The 'HIGH' region motif lies at 11 to 21 (PSPTGHLHIGN). The 'KMSKS' region signature appears at 252–256 (KLSKR). Residue Lys255 participates in ATP binding.

The protein belongs to the class-I aminoacyl-tRNA synthetase family. Glutamate--tRNA ligase type 1 subfamily. Monomer.

It localises to the cytoplasm. It catalyses the reaction tRNA(Glu) + L-glutamate + ATP = L-glutamyl-tRNA(Glu) + AMP + diphosphate. Functionally, catalyzes the attachment of glutamate to tRNA(Glu) in a two-step reaction: glutamate is first activated by ATP to form Glu-AMP and then transferred to the acceptor end of tRNA(Glu). This is Glutamate--tRNA ligase from Bacillus licheniformis (strain ATCC 14580 / DSM 13 / JCM 2505 / CCUG 7422 / NBRC 12200 / NCIMB 9375 / NCTC 10341 / NRRL NRS-1264 / Gibson 46).